The sequence spans 347 residues: SCA7 domain-containing protein SELMODRAFT_439258 (347 aa).

A signal peptide spans 1–13 (MCFFLSSLCPVVA). The tract at residues 77-106 (RAEVGGTGPKVGRPRKLSVYNPREMSDGNP) is disordered. The SCA7 domain maps to 134–201 (QHLPFTVDDL…NNSRKSQQAD (68 aa)).

The chain is SCA7 domain-containing protein SELMODRAFT_439258 from Selaginella moellendorffii (Spikemoss).